The following is an 879-amino-acid chain: MHPFSRLFRNIQSLGEEEVQELLGPPEDALPLLAGEDLNHRVADALNLHLPTADLQWVHKTNAITGLYSNQAAQFNPHWIQPEFPELHLHNELIKKLQQYFGPLTINEKRKLQLNFPARFFPKATKYFPLIKGIKNNYPNFALEHFFATANYLWTLWEAGILYLRKNQTTLTFKGKPYSWEHRQLVQHNGQQHKSHLQSRQNSSVVACSGHLLHNHLPSEPVSVSTRNLSNNIFGKSQNSTRTGLCSHKQIQTDRLEHLARISCRSKTTIGQQGSSPKISSNFRNQTWAYNSSWNSGHTTWFSSASNSNKSRSREKAYSSNSTSKRYSPPLNYEKSDFSSPGVRGRIKRLDNNGTPTQCLWRSFYDTKPCGSYCIHHIVSSIDDWGPCTVTGDVTIKSPRTPRRITGGVFLVDKNPNNSSESRLVVDFSQFSRGHTRVHWPKFAVPNLQTLANLLSTDLQWLSLDVSAAFYHIPISPAAVPHLLVGSPGLERFNTCLSYSTHNRNDSQLQTMHNLCTRHVYSSLLLLFKTYGRKLHLLAHPFIMGFRKLPMGVGLSPFLLAQFTSALASMVRRNFPHCVVFAYMDDLVLGARTSEHLTAIYTHICSVFLDLGIHLNVNKTKWWGNHLHFMGYVITSSGVLPQDKHVKKLSRYLRSVPVNQPLDYKICERLTDILNYVAPFTLCGYAALMPLYHAIASRTAFVFSSLYKSWLLSLYEELWPVVRQRGVVCSVFADATPTGWGIATTCQLLSGTFAFPLPIATAELIAACLARCWTGARLLGTDNSVVLSGKLTSFPWLLACVANWILRGTSFCYVPSALNPADLPSRGLLPVLRPLPRLRFRPPTSRISLWAASPPVSPRRPVRVAWSSPVQNCEPWIPP.

A terminal protein domain (TP) region spans residues 1-184 (MHPFSRLFRN…GKPYSWEHRQ (184 aa)). The segment at 185 to 382 (LVQHNGQQHK…YCIHHIVSSI (198 aa)) is spacer. The disordered stretch occupies residues 304–345 (SASNSNKSRSREKAYSSNSTSKRYSPPLNYEKSDFSSPGVRG). A polymerase/reverse transcriptase domain (RT) region spans residues 383–724 (DDWGPCTVTG…YEELWPVVRQ (342 aa)). The Reverse transcriptase domain occupies 393–634 (DVTIKSPRTP…NHLHFMGYVI (242 aa)). Residues aspartate 465, aspartate 585, and aspartate 586 each coordinate Mg(2+).

The protein belongs to the hepadnaviridae P protein family.

It catalyses the reaction DNA(n) + a 2'-deoxyribonucleoside 5'-triphosphate = DNA(n+1) + diphosphate. The catalysed reaction is Endonucleolytic cleavage to 5'-phosphomonoester.. With respect to regulation, activated by host HSP70 and HSP40 in vitro to be able to bind the epsilon loop of the pgRNA. Because deletion of the RNase H region renders the protein partly chaperone-independent, the chaperones may be needed indirectly to relieve occlusion of the RNA-binding site by this domain. Inhibited by several reverse-transcriptase inhibitors: Lamivudine, Adefovir and Entecavir. Functionally, multifunctional enzyme that converts the viral RNA genome into dsDNA in viral cytoplasmic capsids. This enzyme displays a DNA polymerase activity that can copy either DNA or RNA templates, and a ribonuclease H (RNase H) activity that cleaves the RNA strand of RNA-DNA heteroduplexes in a partially processive 3'- to 5'-endonucleasic mode. Neo-synthesized pregenomic RNA (pgRNA) are encapsidated together with the P protein, and reverse-transcribed inside the nucleocapsid. Initiation of reverse-transcription occurs first by binding the epsilon loop on the pgRNA genome, and is initiated by protein priming, thereby the 5'-end of (-)DNA is covalently linked to P protein. Partial (+)DNA is synthesized from the (-)DNA template and generates the relaxed circular DNA (RC-DNA) genome. After budding and infection, the RC-DNA migrates in the nucleus, and is converted into a plasmid-like covalently closed circular DNA (cccDNA). The activity of P protein does not seem to be necessary for cccDNA generation, and is presumably released from (+)DNA by host nuclear DNA repair machinery. This Woodchuck hepatitis B virus (isolate 1) (WHV) protein is Protein P.